The sequence spans 485 residues: Glutamyl-tRNA(Gln) amidotransferase subunit A (485 aa).

Residues K78 and S153 each act as charge relay system in the active site. The active-site Acyl-ester intermediate is the S177.

This sequence belongs to the amidase family. GatA subfamily. Heterotrimer of A, B and C subunits.

It carries out the reaction L-glutamyl-tRNA(Gln) + L-glutamine + ATP + H2O = L-glutaminyl-tRNA(Gln) + L-glutamate + ADP + phosphate + H(+). Its function is as follows. Allows the formation of correctly charged Gln-tRNA(Gln) through the transamidation of misacylated Glu-tRNA(Gln) in organisms which lack glutaminyl-tRNA synthetase. The reaction takes place in the presence of glutamine and ATP through an activated gamma-phospho-Glu-tRNA(Gln). The polypeptide is Glutamyl-tRNA(Gln) amidotransferase subunit A (Bacillus cereus (strain Q1)).